A 197-amino-acid polypeptide reads, in one-letter code: Dephospho-CoA kinase (197 aa).

The region spanning 4–197 (RLGLTGSIGM…RQIRAGNIHA (194 aa)) is the DPCK domain. Residue 12-17 (GMGKST) participates in ATP binding.

Belongs to the CoaE family.

The protein resides in the cytoplasm. It catalyses the reaction 3'-dephospho-CoA + ATP = ADP + CoA + H(+). It functions in the pathway cofactor biosynthesis; coenzyme A biosynthesis; CoA from (R)-pantothenate: step 5/5. Catalyzes the phosphorylation of the 3'-hydroxyl group of dephosphocoenzyme A to form coenzyme A. The sequence is that of Dephospho-CoA kinase from Ruegeria pomeroyi (strain ATCC 700808 / DSM 15171 / DSS-3) (Silicibacter pomeroyi).